A 246-amino-acid polypeptide reads, in one-letter code: Ribonuclease PH (246 aa).

Residues arginine 95 and 133 to 135 (GTR) contribute to the phosphate site.

Belongs to the RNase PH family. Homohexameric ring arranged as a trimer of dimers.

It catalyses the reaction tRNA(n+1) + phosphate = tRNA(n) + a ribonucleoside 5'-diphosphate. In terms of biological role, phosphorolytic 3'-5' exoribonuclease that plays an important role in tRNA 3'-end maturation. Removes nucleotide residues following the 3'-CCA terminus of tRNAs; can also add nucleotides to the ends of RNA molecules by using nucleoside diphosphates as substrates, but this may not be physiologically important. Probably plays a role in initiation of 16S rRNA degradation (leading to ribosome degradation) during starvation. The polypeptide is Ribonuclease PH (Bordetella bronchiseptica (strain ATCC BAA-588 / NCTC 13252 / RB50) (Alcaligenes bronchisepticus)).